Consider the following 35-residue polypeptide: MEALVYTFLLVGTLGIIFFAIFFREPPKVPVKGKK.

The chain crosses the membrane as a helical span at residues Ala-3–Phe-23.

It belongs to the PsbT family. As to quaternary structure, PSII is composed of 1 copy each of membrane proteins PsbA, PsbB, PsbC, PsbD, PsbE, PsbF, PsbH, PsbI, PsbJ, PsbK, PsbL, PsbM, PsbT, PsbY, PsbZ, Psb30/Ycf12, at least 3 peripheral proteins of the oxygen-evolving complex and a large number of cofactors. It forms dimeric complexes.

Its subcellular location is the plastid. It localises to the chloroplast thylakoid membrane. Functionally, found at the monomer-monomer interface of the photosystem II (PS II) dimer, plays a role in assembly and dimerization of PSII. PSII is a light-driven water plastoquinone oxidoreductase, using light energy to abstract electrons from H(2)O, generating a proton gradient subsequently used for ATP formation. This is Photosystem II reaction center protein T from Staurastrum punctulatum (Green alga).